A 475-amino-acid chain; its full sequence is Aspartyl/glutamyl-tRNA(Asn/Gln) amidotransferase subunit B (475 aa).

The protein belongs to the GatB/GatE family. GatB subfamily. Heterotrimer of A, B and C subunits.

It catalyses the reaction L-glutamyl-tRNA(Gln) + L-glutamine + ATP + H2O = L-glutaminyl-tRNA(Gln) + L-glutamate + ADP + phosphate + H(+). It carries out the reaction L-aspartyl-tRNA(Asn) + L-glutamine + ATP + H2O = L-asparaginyl-tRNA(Asn) + L-glutamate + ADP + phosphate + 2 H(+). Functionally, allows the formation of correctly charged Asn-tRNA(Asn) or Gln-tRNA(Gln) through the transamidation of misacylated Asp-tRNA(Asn) or Glu-tRNA(Gln) in organisms which lack either or both of asparaginyl-tRNA or glutaminyl-tRNA synthetases. The reaction takes place in the presence of glutamine and ATP through an activated phospho-Asp-tRNA(Asn) or phospho-Glu-tRNA(Gln). The chain is Aspartyl/glutamyl-tRNA(Asn/Gln) amidotransferase subunit B from Bacillus thuringiensis subsp. konkukian (strain 97-27).